The following is a 347-amino-acid chain: MIISKEVKLVVENEDAVTSGEVENSEEEAMELSLRPQTLDQYLGQKRVKKEMSIYIKAAKQRDEALDHVLLYGPPGLGKTTLAFVIANELGVHLKSTSGPAIEKAGDLVALLSDLDPGDVLFIDEIHRLAKPVEEVLYSAMEDYYIDIVIGEGQTTHAVHVPLPPFTLIGATTLAGQLSAPLRDRFGIVEHMQYYTIDELEKIVQRSSDVFHTSIAPEAAHELARRSRGTPRVANRFLKRVRDFAEVKGEKTISLATTEGALKQLQVDDEGLDQTDRRLLRTMIEGYNGGPVGIRTLAANVGEDMETIESLYEPYLLQHGFILLGPRGRMVTDKAYLQLGLPVPGDK.

The interval 13-195 (NEDAVTSGEV…FGIVEHMQYY (183 aa)) is large ATPase domain (RuvB-L). Residues Leu34, Arg35, Gly76, Lys79, Thr80, Thr81, 142–144 (EDY), Arg185, Tyr195, and Arg232 each bind ATP. Thr80 contacts Mg(2+). The interval 196 to 266 (TIDELEKIVQ…TTEGALKQLQ (71 aa)) is small ATPAse domain (RuvB-S). The tract at residues 269–347 (DEGLDQTDRR…QLGLPVPGDK (79 aa)) is head domain (RuvB-H). Arg329 serves as a coordination point for DNA.

It belongs to the RuvB family. Homohexamer. Forms an RuvA(8)-RuvB(12)-Holliday junction (HJ) complex. HJ DNA is sandwiched between 2 RuvA tetramers; dsDNA enters through RuvA and exits via RuvB. An RuvB hexamer assembles on each DNA strand where it exits the tetramer. Each RuvB hexamer is contacted by two RuvA subunits (via domain III) on 2 adjacent RuvB subunits; this complex drives branch migration. In the full resolvosome a probable DNA-RuvA(4)-RuvB(12)-RuvC(2) complex forms which resolves the HJ.

The protein localises to the cytoplasm. It carries out the reaction ATP + H2O = ADP + phosphate + H(+). The RuvA-RuvB-RuvC complex processes Holliday junction (HJ) DNA during genetic recombination and DNA repair, while the RuvA-RuvB complex plays an important role in the rescue of blocked DNA replication forks via replication fork reversal (RFR). RuvA specifically binds to HJ cruciform DNA, conferring on it an open structure. The RuvB hexamer acts as an ATP-dependent pump, pulling dsDNA into and through the RuvAB complex. RuvB forms 2 homohexamers on either side of HJ DNA bound by 1 or 2 RuvA tetramers; 4 subunits per hexamer contact DNA at a time. Coordinated motions by a converter formed by DNA-disengaged RuvB subunits stimulates ATP hydrolysis and nucleotide exchange. Immobilization of the converter enables RuvB to convert the ATP-contained energy into a lever motion, pulling 2 nucleotides of DNA out of the RuvA tetramer per ATP hydrolyzed, thus driving DNA branch migration. The RuvB motors rotate together with the DNA substrate, which together with the progressing nucleotide cycle form the mechanistic basis for DNA recombination by continuous HJ branch migration. Branch migration allows RuvC to scan DNA until it finds its consensus sequence, where it cleaves and resolves cruciform DNA. In Lactobacillus helveticus (strain DPC 4571), this protein is Holliday junction branch migration complex subunit RuvB.